A 111-amino-acid polypeptide reads, in one-letter code: MGSSSFLVLMVSLVLVTLVAVEGVKEGIEKAGVCPADNVRCFKSDPPQCHTDQDCLGERKCCYLHCGFKCVIPVKELEEGGNKDEDVSRPYPEPGWEAKCPGSSSTRCPQK.

The signal sequence occupies residues 1–23 (MGSSSFLVLMVSLVLVTLVAVEG). One can recognise a WAP domain in the interval 27 to 74 (GIEKAGVCPADNVRCFKSDPPQCHTDQDCLGERKCCYLHCGFKCVIPV). Cystine bridges form between Cys-34–Cys-62, Cys-41–Cys-66, Cys-49–Cys-61, and Cys-55–Cys-70. Residues 80–111 (GGNKDEDVSRPYPEPGWEAKCPGSSSTRCPQK) form a disordered region. The segment covering 102–111 (GSSSTRCPQK) has biased composition (polar residues).

Highly expressed in prostate, skin, lung and esophagus. Weakly expressed in skeletal muscle, epididymis, kidney, trachea, salivary gland, testis and seminal vesicle.

Its subcellular location is the secreted. Functionally, antibacterial protein. Putative acid-stable proteinase inhibitor. The polypeptide is WAP four-disulfide core domain protein 12 (WFDC12) (Homo sapiens (Human)).